The primary structure comprises 465 residues: D-arabinitol 4-dehydrogenase (465 aa).

Belongs to the mannitol dehydrogenase family.

The catalysed reaction is D-arabinitol + NAD(+) = D-xylulose + NADH + H(+). It functions in the pathway carbohydrate metabolism; D-arabinitol metabolism. The chain is D-arabinitol 4-dehydrogenase (dalD) from Ralstonia nicotianae (strain ATCC BAA-1114 / GMI1000) (Ralstonia solanacearum).